Here is a 750-residue protein sequence, read N- to C-terminus: Coiled-coil domain-containing protein 142 (750 aa).

Positions 1–29 (MAQASRSGSLPPLVIVPPLRAQPGGTGEE) are disordered. Residues 87-110 (ALQRLRAVLLRLHREREQLLQARD) adopt a coiled-coil conformation. Residues 687–714 (LEPPLQPGTSPAQTGQLQSTLGGRGPSP) form a disordered region. Polar residues predominate over residues 693–707 (PGTSPAQTGQLQSTL).

This chain is Coiled-coil domain-containing protein 142 (CCDC142), found in Homo sapiens (Human).